The sequence spans 414 residues: Serine hydroxymethyltransferase (414 aa).

Residues Leu121 and 125 to 127 each bind (6S)-5,6,7,8-tetrahydrofolate; that span reads GHL. Lys229 bears the N6-(pyridoxal phosphate)lysine mark.

It belongs to the SHMT family. As to quaternary structure, homodimer. Pyridoxal 5'-phosphate is required as a cofactor.

The protein localises to the cytoplasm. The enzyme catalyses (6R)-5,10-methylene-5,6,7,8-tetrahydrofolate + glycine + H2O = (6S)-5,6,7,8-tetrahydrofolate + L-serine. It participates in one-carbon metabolism; tetrahydrofolate interconversion. Its pathway is amino-acid biosynthesis; glycine biosynthesis; glycine from L-serine: step 1/1. Catalyzes the reversible interconversion of serine and glycine with tetrahydrofolate (THF) serving as the one-carbon carrier. This reaction serves as the major source of one-carbon groups required for the biosynthesis of purines, thymidylate, methionine, and other important biomolecules. Also exhibits THF-independent aldolase activity toward beta-hydroxyamino acids, producing glycine and aldehydes, via a retro-aldol mechanism. The sequence is that of Serine hydroxymethyltransferase from Polynucleobacter necessarius subsp. necessarius (strain STIR1).